Here is a 196-residue protein sequence, read N- to C-terminus: uncharacterized protein (196 aa).

This sequence to H.influenzae HI_0431.

This is an uncharacterized protein from Escherichia coli (strain K12).